A 238-amino-acid polypeptide reads, in one-letter code: MSQPIYKRILLKLSGEALQGDEGFGIDPSILDRMALEIKGLLGLGVEVGVVLGGGNLFRGAKLAKAGMNRVVGDHMGMLATVMNGLAMRDALHRANVNAKLMSAFQLNGICDTYNWSEAIKMLCEKRVVIFSAGTGSPFFTTDSAACLRGIEIEADVVLKATKVDGVYDCDPVKNPNAVLYHKLSYAEVIEKELQVMDLAAFTLARDHNMPIRVFNMSKTGALRNVILGKTEGTLICD.

12–15 (KLSG) serves as a coordination point for ATP. Positions 20–25 (GDEGFG) are involved in allosteric activation by GTP. UMP is bound at residue G54. G55 and R59 together coordinate ATP. UMP is bound by residues D74 and 135-142 (TGSPFFTT). ATP-binding residues include T162, Y168, and D171.

Belongs to the UMP kinase family. As to quaternary structure, homohexamer.

The protein localises to the cytoplasm. It catalyses the reaction UMP + ATP = UDP + ADP. The protein operates within pyrimidine metabolism; CTP biosynthesis via de novo pathway; UDP from UMP (UMPK route): step 1/1. Its activity is regulated as follows. Allosterically activated by GTP. Inhibited by UTP. Functionally, catalyzes the reversible phosphorylation of UMP to UDP. This Histophilus somni (strain 129Pt) (Haemophilus somnus) protein is Uridylate kinase.